Consider the following 1175-residue polypeptide: MNPAFAQPMMRPNLPLRRPATGPSSLSPRGPAPAIYEERLLASDVLDGPKIDTMRKDISQNCGDVLSSPQTAVSMMGQVVKLCNYCSHQGNLRCTRCKKTCYCSVACQTQDWIAHRHVCKPSIPEVTSEKPKESKAVPYANGLGGTQAKEISVDAQPKRIYRRDLHKKVVSKGSEIKGTVIDLRNPGMFSIHCQCEEMIESLKKITQQLQKTYCSSFAQEYKPEVGELCAVKFSLDQNWYRAEIQAVDVARKTAGVFYIDFGNEENVALDHIRPLSENIDAVPPFALQCCIAGVKPLTGSWTGECCIAVRQLIAGKSLTFTVLDIMNDGDLLAVDSLVSTLGKHVSTFLIDQSYAIKEDVPVKTQTEHSISSLLTASFENFKRFSGGKNENSEARPPEPLTQGVGDSFTAVVTHLQSPSEILCQKLENASIIQQLQMNLRVHCSNTAASDDFRPAPGTVCCSLFSEDNQWYRAKVLAYSSEDRVCVGYIDFGNSEEVELNRLRPISKELLALATQAIPCSLAGIKSLTDTWSDEAVLMLKHLVCNRFIRVEILGKKDGRALVSMIDESSDPQASVTELLVNMGFAAIESVETKKNEPDPATSTEIPLSQPVVEKLEWTGAELPFDGQKVELVISTLKSLDEFYCYNYSKTDEHTLTEMSFELMKHCESERAPFTPIVGEPCCALFTGDARWYRAMVLEVCGEGKARVCFVDYGNSCEVDAAHLKAITQSLLKLPFQAIRCWLAGVEPVEGQWKKEAMLRFQALCAGQPLSGKVLSITEKGYGMELESAGQTVASVLISEHLAKPYGQVRQPPQIQPAKPASQIEDLPSLKPIDQNPSVEEPLKVSSKGAATTPEDLPVSSGCFPLNWKTLELSCSGTFQPRVAAVISPSLFYIMNPGQVNVEGLKAVMTDVAKYCSKQPVPNQCHPLPGASCCAQFSGDKNWYRAVVLEVTTKHAHVIYSDYGNMETVPLSSILPITKELLQHPFQIVRCALTGKEHFPVVWPTEVLELFGIQLSGGVLASFQGFDGTSNLLTLTQQSGQSDRDINSIILGALQKGQIKPSSKLPANVNEEKKDVEQKQTQPISSNKAVEQTLSTNVEKPALDDQTLPLSVSLKHEEPENMSKTKTAEECTSTPDTVSSIESSHAAQSCCCQELKQKMDRIEELVLLLVKQVGSR.

The segment at 1–32 is disordered; that stretch reads MNPAFAQPMMRPNLPLRRPATGPSSLSPRGPA. Low complexity predominate over residues 8 to 19; it reads PMMRPNLPLRRP. 8 residues coordinate Zn(2+): C83, C86, C94, C97, C103, C107, H115, and C119. The MYND-type zinc finger occupies 83–119; it reads CNYCSHQGNLRCTRCKKTCYCSVACQTQDWIAHRHVC. Tudor domains are found at residues 222–282, 453–512, and 674–733; these read KPEV…IDAV, RPAP…LLAL, and TPIV…LLKL. Residues 827–852 form a disordered region; it reads PSLKPIDQNPSVEEPLKVSSKGAATT. The 59-residue stretch at 925-983 folds into the Tudor 4 domain; the sequence is HPLPGASCCAQFSGDKNWYRAVVLEVTTKHAHVIYSDYGNMETVPLSSILPITKELLQH. 2 disordered regions span residues 1060 to 1089 and 1115 to 1136; these read PSSKLPANVNEEKKDVEQKQTQPISSNKAV and HEEPENMSKTKTAEECTSTPDT. Over residues 1078–1089 the composition is skewed to polar residues; that stretch reads KQTQPISSNKAV. The segment covering 1115-1128 has biased composition (basic and acidic residues); it reads HEEPENMSKTKTAE.

Belongs to the TDRD1 family.

It is found in the cytoplasm. Its function is as follows. Plays a central role during spermatogenesis by participating in the repression transposable elements and preventing their mobilization, which is essential for the germline integrity. Acts via the piRNA metabolic process, which mediates the repression of transposable elements during meiosis by forming complexes composed of piRNAs and Piwi proteins and governs the methylation and subsequent repression of transposons. Required for the localization of Piwi proteins to the meiotic nuage. Involved in the piRNA metabolic process by ensuring the entry of correct transcripts into the normal piRNA pool and limiting the entry of cellular transcripts into the piRNA pathway. May act by allowing the recruitment of piRNA biogenesis or loading factors that ensure the correct entry of transcripts and piRNAs into Piwi proteins. In Danio rerio (Zebrafish), this protein is Tudor domain-containing protein 1 (tdrd1).